We begin with the raw amino-acid sequence, 458 residues long: Glycine--tRNA ligase (458 aa).

Residues Arg-97 and Glu-171 each contribute to the substrate site. Residues 203–205 (RNE), 213–218 (FRTREF), 287–288 (EL), and 331–334 (GADR) contribute to the ATP site. A substrate-binding site is contributed by 218–222 (FEQME). 327 to 331 (EPSLG) serves as a coordination point for substrate.

Belongs to the class-II aminoacyl-tRNA synthetase family. As to quaternary structure, homodimer.

It is found in the cytoplasm. The catalysed reaction is tRNA(Gly) + glycine + ATP = glycyl-tRNA(Gly) + AMP + diphosphate. Catalyzes the attachment of glycine to tRNA(Gly). This chain is Glycine--tRNA ligase, found in Bacillus anthracis.